The following is an 825-amino-acid chain: Neuroligin-3 (825 aa).

An N-terminal signal peptide occupies residues 1 to 34 (MWLQPSLSLSPTPTVGRSLCLTLGFLSLVLRAST). The Extracellular portion of the chain corresponds to 35-686 (QAPAPTVNTH…NPRDYSTELS (652 aa)). An N-linked (GlcNAc...) asparagine glycan is attached at Asn-95. The cysteines at positions 103 and 138 are disulfide-linked. A disordered region spans residues 151–172 (SGAKKQGEDLADNDGDEDEDIR). A compositionally biased stretch (acidic residues) spans 159–171 (DLADNDGDEDEDI). Disulfide bonds link Cys-317–Cys-328 and Cys-487–Cys-521. A glycan (N-linked (GlcNAc...) asparagine) is linked at Asn-522. Composition is skewed to polar residues over residues 622 to 633 (TKVPPPDTTHSS) and 654 to 666 (AYSN…SWNG). The tract at residues 622–668 (TKVPPPDTTHSSHITRRPNGKTWSTKRPAISPAYSNENAPGSWNGDQ) is disordered. A helical membrane pass occupies residues 687–707 (VTIAVGASLLFLNVLAFAALY). Topologically, residues 708–825 (YRKDKRRQEP…LPHSHSTTRV (118 aa)) are cytoplasmic. Ser-722 carries the post-translational modification Phosphoserine. The residue at position 769 (Tyr-769) is a Phosphotyrosine.

It belongs to the type-B carboxylesterase/lipase family. In terms of assembly, homodimer, and heterodimer with NLGN1 and NLGN2. Interacts with neurexins NRXN1, NRXN2 and NRXN3. Interaction with neurexins is mediated by heparan sulfate glycan modification on neurexin. Interacts (via its C-terminus) with DLG4/PSD-95 (via PDZ domain 3). As to expression, brain and arteries (at protein level). Detected in heart, brain, spleen, lung, liver, skeletal muscle, kidney and testis. Expressed in olfactory bulb and olfactory epithelium. Found in olfactory ensheathing glia but not in olfactory neurons, and in developing peripheral glia.

The protein localises to the cell membrane. The protein resides in the synapse. Its function is as follows. Cell surface protein involved in cell-cell-interactions via its interactions with neurexin family members. Plays a role in synapse function and synaptic signal transmission, and probably mediates its effects by recruiting and clustering other synaptic proteins. May promote the initial formation of synapses, but is not essential for this. May also play a role in glia-glia or glia-neuron interactions in the developing peripheral nervous system. This is Neuroligin-3 (Nlgn3) from Mus musculus (Mouse).